A 255-amino-acid chain; its full sequence is Ribosomal RNA small subunit methyltransferase A (255 aa).

S-adenosyl-L-methionine-binding residues include N12, L14, G39, E60, D84, and N106.

Belongs to the class I-like SAM-binding methyltransferase superfamily. rRNA adenine N(6)-methyltransferase family. RsmA subfamily.

It is found in the cytoplasm. It catalyses the reaction adenosine(1518)/adenosine(1519) in 16S rRNA + 4 S-adenosyl-L-methionine = N(6)-dimethyladenosine(1518)/N(6)-dimethyladenosine(1519) in 16S rRNA + 4 S-adenosyl-L-homocysteine + 4 H(+). Functionally, specifically dimethylates two adjacent adenosines (A1518 and A1519) in the loop of a conserved hairpin near the 3'-end of 16S rRNA in the 30S particle. May play a critical role in biogenesis of 30S subunits. This chain is Ribosomal RNA small subunit methyltransferase A, found in Herminiimonas arsenicoxydans.